The primary structure comprises 116 residues: Flagellar transcriptional regulator FlhD (116 aa).

It belongs to the FlhD family. In terms of assembly, homodimer; disulfide-linked. Forms a heterohexamer composed of two FlhC and four FlhD subunits. Each FlhC binds a FlhD dimer, forming a heterotrimer, and a hexamer assembles by dimerization of two heterotrimers.

Its subcellular location is the cytoplasm. In terms of biological role, functions in complex with FlhC as a master transcriptional regulator that regulates transcription of several flagellar and non-flagellar operons by binding to their promoter region. Activates expression of class 2 flagellar genes, including fliA, which is a flagellum-specific sigma factor that turns on the class 3 genes. Also regulates genes whose products function in a variety of physiological pathways. This chain is Flagellar transcriptional regulator FlhD, found in Yersinia pseudotuberculosis serotype O:1b (strain IP 31758).